The primary structure comprises 294 residues: Urease accessory protein UreD 1 (294 aa).

The disordered stretch occupies residues 1–22; sequence MALSLDGLPEKPAPAEAPSPPV. Residues 11 to 21 are compositionally biased toward pro residues; that stretch reads KPAPAEAPSPP.

It belongs to the UreD family. As to quaternary structure, ureD, UreF and UreG form a complex that acts as a GTP-hydrolysis-dependent molecular chaperone, activating the urease apoprotein by helping to assemble the nickel containing metallocenter of UreC. The UreE protein probably delivers the nickel.

The protein localises to the cytoplasm. Functionally, required for maturation of urease via the functional incorporation of the urease nickel metallocenter. The polypeptide is Urease accessory protein UreD 1 (Methylorubrum extorquens (strain PA1) (Methylobacterium extorquens)).